Reading from the N-terminus, the 329-residue chain is Putative oligopeptide transport ATP-binding protein YkfD (329 aa).

In terms of domain architecture, ABC transporter spans 7 to 252; sequence LEVSQLKMHF…PLHPYTKALL (246 aa). Position 44–51 (44–51) interacts with ATP; the sequence is GESGCGKS.

The protein belongs to the ABC transporter superfamily.

This chain is Putative oligopeptide transport ATP-binding protein YkfD (ykfD), found in Bacillus subtilis (strain 168).